An 842-amino-acid polypeptide reads, in one-letter code: MANILRTVIENDKGELKKLDKIAKKVDSYADHMAALSDEALQAKTPEFKERYQNGETLDQLLPEAFAVVREASKRVLGLYPYHVQIMGGIVLHHGDIPEMRTGEGKTLTATMPVYLNAISGLGVHVITVNEYLSTRDATEMGEVYSWLGLSVGINLAAKSPFEKREAYNCDITYSTNAEVGFDYLRDNMVVRQEDMVQRPLNYALVDEVDSVLIDEARTPLIVSGPVSSEMNQLYTRADMFVKTLNSDDYIIDVPTKTIGLSDTGIDKAENYFHLNNLYDLENVALTHYIDNALRANYIMLLNIDYVVSEEQEILIVDQFTGRTMEGRRFSDGLHQAIEAKESVPIQEESKTSASITYQNMFRMYHKLAGMTGTGKTEEEEFREIYNMRVIPIPTNRPVQRIDHSDLLYPTLDSKFRAVVADVKERYEQGQPVLVGTVAVETSDLISRKLVAAGVPHEVLNAKNHFKEAQIIMNAGQRGAVTIATNMAGRGTDIKLGEGVRELGGLCVIGTERHESRRIDNQLRGRSGRQGDPGESQFYLSLEDDLMRRFGTDRIKVVLERMNLAEDDTVIKSKMLTRQVESAQRRVEGNNYDTRKQVLQYDDVMREQREIIYANRREVITAERDLGPELKGMIKRTIKRAVDAHSRSDKNTAAEAIVNFARSALLDEEAITVSELRGLKEAEIKELLYERALAVYEQQIAKLKDPEAIIEFQKVLILMVVDNQWTEHIDALDQLRNSVGLRGYAQNNPIVEYQSEGFRMFQDMIGSIEFDVTRTLMKAQIHEQERERASQHATTTAEQNISAQHVPMNNESPEYQGIKRNDKCPCGSGMKFKNCHGLRCLQ.

ATP is bound by residues Gln85, 103–107, and Asp493; that span reads GEGKT. Cys824, Cys826, Cys835, and His836 together coordinate Zn(2+).

This sequence belongs to the SecA family. As to quaternary structure, monomer and homodimer. Part of the essential Sec protein translocation apparatus which comprises SecA, SecYEG and auxiliary proteins SecDF. Other proteins may also be involved. Zn(2+) serves as cofactor.

The protein localises to the cell membrane. Its subcellular location is the cytoplasm. It catalyses the reaction ATP + H2O + cellular proteinSide 1 = ADP + phosphate + cellular proteinSide 2.. In terms of biological role, part of the Sec protein translocase complex. Interacts with the SecYEG preprotein conducting channel. Has a central role in coupling the hydrolysis of ATP to the transfer of proteins into and across the cell membrane, serving as an ATP-driven molecular motor driving the stepwise translocation of polypeptide chains across the membrane. This Streptococcus agalactiae serotype Ia (strain ATCC 27591 / A909 / CDC SS700) protein is Protein translocase subunit SecA 1.